The primary structure comprises 77 residues: Major outer membrane lipoprotein Lpp (77 aa).

The first 19 residues, 1-19 (MNRTKLVLGAVILGSHSAG), serve as a signal peptide directing secretion. Residue Cys20 is the site of N-palmitoyl cysteine attachment. Cys20 carries the S-diacylglycerol cysteine lipid modification. 2 repeats span residues 23 to 33 (NAKIDQLSSDV) and 37 to 47 (NAKVDQLSNDV). The stretch at 26–74 (IDQLSSDVQTLNAKVDQLSNDVNAMRSDVQAAKDDAARANQRLDNQAHA) forms a coiled coil. Positions 56-77 (AAKDDAARANQRLDNQAHAYKK) are disordered. Residue Lys77 is modified to N6-murein peptidoglycan lysine.

It belongs to the Lpp family. In terms of assembly, homotrimer.

Its subcellular location is the cell outer membrane. It is found in the secreted. The protein resides in the cell wall. A highly abundant outer membrane lipoprotein that controls the distance between the inner and outer membranes. The only protein known to be covalently linked to the peptidoglycan network (PGN). Also non-covalently binds the PGN. The link between the cell outer membrane and PGN contributes to maintenance of the structural and functional integrity of the cell envelope, and maintains the correct distance between the PGN and the outer membrane. In Serratia marcescens, this protein is Major outer membrane lipoprotein Lpp.